The chain runs to 167 residues: Large ribosomal subunit protein uL22 (167 aa).

The tract at residues 120-167 (GSTATTVEDEAPKAKGAKGAKAKKAPAKKAAAKKAPAKKFAGKKTAKR) is disordered. Positions 134–167 (KGAKGAKAKKAPAKKAAAKKAPAKKFAGKKTAKR) are enriched in basic residues.

Belongs to the universal ribosomal protein uL22 family. As to quaternary structure, part of the 50S ribosomal subunit.

Its function is as follows. This protein binds specifically to 23S rRNA; its binding is stimulated by other ribosomal proteins, e.g. L4, L17, and L20. It is important during the early stages of 50S assembly. It makes multiple contacts with different domains of the 23S rRNA in the assembled 50S subunit and ribosome. The globular domain of the protein is located near the polypeptide exit tunnel on the outside of the subunit, while an extended beta-hairpin is found that lines the wall of the exit tunnel in the center of the 70S ribosome. In Koribacter versatilis (strain Ellin345), this protein is Large ribosomal subunit protein uL22.